The sequence spans 156 residues: Putative pre-16S rRNA nuclease (156 aa).

It belongs to the YqgF nuclease family.

Its subcellular location is the cytoplasm. Could be a nuclease involved in processing of the 5'-end of pre-16S rRNA. The protein is Putative pre-16S rRNA nuclease of Aromatoleum aromaticum (strain DSM 19018 / LMG 30748 / EbN1) (Azoarcus sp. (strain EbN1)).